The following is a 370-amino-acid chain: Protein phosphatase 2C homolog 2 (370 aa).

Positions 23–291 (HFGVSHMQGW…DNMTICIVAF (269 aa)) constitute a PPM-type phosphatase domain. Mn(2+) is bound by residues aspartate 63, glycine 64, aspartate 233, and aspartate 282. 2 positions are modified to phosphoserine: serine 355 and serine 357.

This sequence belongs to the PP2C family. In terms of assembly, monomer. The cofactor is Mg(2+). Mn(2+) is required as a cofactor.

The protein resides in the nucleus. It is found in the cytoplasm. Its subcellular location is the cytosol. It carries out the reaction O-phospho-L-seryl-[protein] + H2O = L-seryl-[protein] + phosphate. The enzyme catalyses O-phospho-L-threonyl-[protein] + H2O = L-threonyl-[protein] + phosphate. With respect to regulation, activity is reduced when phosphosrylated at Ser-355/Ser-357. Functionally, dephosphorylating regulator for many key proteins. Has an important role in osmotic stability and cell shape control. It may negatively regulate the osmosensing signal transmitted through wis1 map kinase. The chain is Protein phosphatase 2C homolog 2 (ptc2) from Schizosaccharomyces pombe (strain 972 / ATCC 24843) (Fission yeast).